Reading from the N-terminus, the 397-residue chain is MIRYFTAGESHGPALSAIVEGMPAGVALTESDINDQLARRQQGYGRGGRMKIETDRAEVLSGVRFGKTIGSPVAMLIRNRDWENWTTSMAQFEDHATEVQKITIPRPGHADLTGFVKYGFDDIRPVIDRSSARETAARVAAGSLARAFLRQLGIQIGSYISTIGPVSEAAAPASLQELLDAGAESLAAEADKSPVRMLDPEAETAAIAAIDQAKADGDTLGGIVELYITGVPMGLGSYVQHDRRLDSELAAAIMSIQAIKGVEIGPAFDNARKPGSQVHDELFAGGEKGLRRETNRAGGIEGSMSSGQPIHIRAAMKPISSLVSPLSSFDLATLEAVQSRFERSDTCAVPAAGVVAEAVVAPVIANALLEKLGGDHMAEIKERLEVYRAALRMRFEK.

NADP(+)-binding residues include Arg-40 and Arg-46. FMN contacts are provided by residues 129 to 131 (RSS), 257 to 258 (QA), Gly-302, 317 to 321 (KPISS), and Arg-343.

The protein belongs to the chorismate synthase family. In terms of assembly, homotetramer. FMNH2 is required as a cofactor.

It carries out the reaction 5-O-(1-carboxyvinyl)-3-phosphoshikimate = chorismate + phosphate. The protein operates within metabolic intermediate biosynthesis; chorismate biosynthesis; chorismate from D-erythrose 4-phosphate and phosphoenolpyruvate: step 7/7. Its function is as follows. Catalyzes the anti-1,4-elimination of the C-3 phosphate and the C-6 proR hydrogen from 5-enolpyruvylshikimate-3-phosphate (EPSP) to yield chorismate, which is the branch point compound that serves as the starting substrate for the three terminal pathways of aromatic amino acid biosynthesis. This reaction introduces a second double bond into the aromatic ring system. This is Chorismate synthase from Chlorobaculum tepidum (strain ATCC 49652 / DSM 12025 / NBRC 103806 / TLS) (Chlorobium tepidum).